The following is a 233-amino-acid chain: Sugar fermentation stimulation protein homolog (233 aa).

It belongs to the SfsA family.

This chain is Sugar fermentation stimulation protein homolog, found in Saccharophagus degradans (strain 2-40 / ATCC 43961 / DSM 17024).